A 316-amino-acid chain; its full sequence is Biotin synthase (316 aa).

Residues 36–264 (TEIQISTLLS…ASRVRLAAGR (229 aa)) enclose the Radical SAM core domain. 3 residues coordinate [4Fe-4S] cluster: Cys-51, Cys-55, and Cys-58. Residues Cys-96, Cys-127, Cys-187, and Arg-259 each contribute to the [2Fe-2S] cluster site.

This sequence belongs to the radical SAM superfamily. Biotin synthase family. Homodimer. [4Fe-4S] cluster serves as cofactor. The cofactor is [2Fe-2S] cluster.

It carries out the reaction (4R,5S)-dethiobiotin + (sulfur carrier)-SH + 2 reduced [2Fe-2S]-[ferredoxin] + 2 S-adenosyl-L-methionine = (sulfur carrier)-H + biotin + 2 5'-deoxyadenosine + 2 L-methionine + 2 oxidized [2Fe-2S]-[ferredoxin]. The protein operates within cofactor biosynthesis; biotin biosynthesis; biotin from 7,8-diaminononanoate: step 2/2. Catalyzes the conversion of dethiobiotin (DTB) to biotin by the insertion of a sulfur atom into dethiobiotin via a radical-based mechanism. The polypeptide is Biotin synthase (Gluconacetobacter diazotrophicus (strain ATCC 49037 / DSM 5601 / CCUG 37298 / CIP 103539 / LMG 7603 / PAl5)).